Reading from the N-terminus, the 147-residue chain is D-aminoacyl-tRNA deacylase (147 aa).

The Gly-cisPro motif, important for rejection of L-amino acids motif lies at 136-137 (GP).

This sequence belongs to the DTD family. As to quaternary structure, homodimer.

The protein localises to the cytoplasm. It carries out the reaction glycyl-tRNA(Ala) + H2O = tRNA(Ala) + glycine + H(+). It catalyses the reaction a D-aminoacyl-tRNA + H2O = a tRNA + a D-alpha-amino acid + H(+). In terms of biological role, an aminoacyl-tRNA editing enzyme that deacylates mischarged D-aminoacyl-tRNAs. Also deacylates mischarged glycyl-tRNA(Ala), protecting cells against glycine mischarging by AlaRS. Acts via tRNA-based rather than protein-based catalysis; rejects L-amino acids rather than detecting D-amino acids in the active site. By recycling D-aminoacyl-tRNA to D-amino acids and free tRNA molecules, this enzyme counteracts the toxicity associated with the formation of D-aminoacyl-tRNA entities in vivo and helps enforce protein L-homochirality. This chain is D-aminoacyl-tRNA deacylase, found in Streptococcus agalactiae serotype Ia (strain ATCC 27591 / A909 / CDC SS700).